A 160-amino-acid polypeptide reads, in one-letter code: Large ribosomal subunit protein uL10 (160 aa).

It belongs to the universal ribosomal protein uL10 family. As to quaternary structure, part of the ribosomal stalk of the 50S ribosomal subunit. The N-terminus interacts with L11 and the large rRNA to form the base of the stalk. The C-terminus forms an elongated spine to which L12 dimers bind in a sequential fashion forming a multimeric L10(L12)X complex.

In terms of biological role, forms part of the ribosomal stalk, playing a central role in the interaction of the ribosome with GTP-bound translation factors. The sequence is that of Large ribosomal subunit protein uL10 from Ehrlichia canis (strain Jake).